The following is a 64-amino-acid chain: Large ribosomal subunit protein bL28 (64 aa).

Belongs to the bacterial ribosomal protein bL28 family.

The polypeptide is Large ribosomal subunit protein bL28 (rpmB) (Mycobacterium leprae (strain TN)).